The chain runs to 410 residues: Lipid droplet-regulating VLDL assembly factor AUP1 (410 aa).

The residue at position 1 (Met-1) is an N-acetylmethionine. At 1 to 20 (MEPPPAPGPERLFDSHRLPS) the chain is on the cytoplasmic side. Residues 21–41 (DGFLLLALLLYAPVGLCLLVL) lie within the membrane without spanning it. Residues 42 to 410 (RLFLGLHVFL…FRERQAQEAE (369 aa)) lie on the Cytoplasmic side of the membrane. A disordered region spans residues 258–295 (RLTPADKAEHMKRQRHPRLRPQSVQSSFPSPPSPSSDV). Ser-292 carries the phosphoserine modification. The CUE domain maps to 296 to 338 (QLTTLAHRVKEVLPHVPLNVIQRDLARTGCVDLTITNLLEGAV). The disordered stretch occupies residues 344–369 (DVTEGSQSPPAPSAPKFPSSGLATPQ). The residue at position 363 (Ser-363) is a Phosphoserine. Phosphothreonine is present on Thr-367.

It belongs to the AUP1 family. As to quaternary structure, identified in a complex that contains SEL1L, OS9, FAF2/UBXD8, UBE2J1/UBC6E and AUP1. Interacts with the cytoplasmic tail of ITGA2B, ITGA1, ITGA2, ITGA5, ITGAV and ITGAM. Interacts (via C-terminus) with UBE2G2; the interaction recruits UBE2G2 to lipid droplets. Interacts with ubiquitin ligases AMFR/gp78 and RNF139/TRC8; this promotes interaction of UBE2G2 with AMFR and RNF139. Interacts with apolipoprotein APOB. In terms of processing, monoubiquitinated and diubiquitinated. As to expression, ubiquitous.

The protein localises to the endoplasmic reticulum membrane. The protein resides in the lipid droplet. Its function is as follows. Plays a role in the translocation of terminally misfolded proteins from the endoplasmic reticulum lumen to the cytoplasm and their degradation by the proteasome. Plays a role in lipid droplet formation. Induces lipid droplet clustering. Recruits ubiquitin-conjugating enzyme UBE2G2 to lipid droplets which facilitates its interaction with ubiquitin ligases AMFR/gp78 and RNF139/TRC8, leading to sterol-induced ubiquitination of HMGCR and its subsequent proteasomal degradation. Also required for the degradation of INSIG1, SREBF1 and SREBF2. Plays a role in regulating assembly and secretion of very low density lipoprotein particles and stability of apolipoprotein APOB. The chain is Lipid droplet-regulating VLDL assembly factor AUP1 from Mus musculus (Mouse).